Here is a 61-residue protein sequence, read N- to C-terminus: Temporin-SN4 (61 aa).

Positions 1 to 22 (MFTLKKTLLLLFFLGTINLSLC) are cleaved as a signal peptide. A propeptide spans 23 to 44 (EEERNAEEERRDGDDEMDVEVK) (removed in mature form). Lysine amide is present on K61.

The protein belongs to the frog skin active peptide (FSAP) family. Temporin subfamily. Expressed by the skin glands.

It is found in the secreted. In terms of biological role, antimicrobial peptide. Active against some Gram-positive and Gram-negative bacterial strains. Active against fungus C.glabrata 090902 but not against C.albicans ATCC 12231. Shows weak hemolytic activity against human erythrocytes. The chain is Temporin-SN4 from Sylvirana spinulosa (Fine-spined frog).